The following is a 215-amino-acid chain: Extracellular small neutral protease (215 aa).

A signal peptide spans Met1–Ala30. Thr152 is a Ca(2+) binding site. His157 contributes to the Zn(2+) binding site. Glu158 is a catalytic residue. Zn(2+) contacts are provided by His161 and Asp167. Cys173 and Cys186 are disulfide-bonded.

The protein belongs to the peptidase M7 family. It depends on Zn(2+) as a cofactor.

It localises to the secreted. The enzyme catalyses Hydrolyzes proteins with a preference for Tyr or Phe in the P1' position. Has no action on amino-acid p-nitroanilides.. The chain is Extracellular small neutral protease (snpA) from Streptomyces coelicolor.